Here is a 120-residue protein sequence, read N- to C-terminus: Large ribosomal subunit protein uL18 (120 aa).

The protein belongs to the universal ribosomal protein uL18 family. As to quaternary structure, part of the 50S ribosomal subunit; part of the 5S rRNA/L5/L18/L25 subcomplex. Contacts the 5S and 23S rRNAs.

This is one of the proteins that bind and probably mediate the attachment of the 5S RNA into the large ribosomal subunit, where it forms part of the central protuberance. The polypeptide is Large ribosomal subunit protein uL18 (Chloroflexus aggregans (strain MD-66 / DSM 9485)).